The following is a 640-amino-acid chain: Endoglucanase 1 (640 aa).

Residues 1-24 (MARRGGAAASSSMANLLGVALVLA) form the signal peptide. D94 functions as the Nucleophile in the catalytic mechanism. Residues H433, D485, and E494 contribute to the active site. N-linked (GlcNAc...) asparagine glycosylation is found at N528 and N548.

It belongs to the glycosyl hydrolase 9 (cellulase E) family. As to expression, expressed in roots, leaf sheaths and flowers.

It localises to the secreted. The enzyme catalyses Endohydrolysis of (1-&gt;4)-beta-D-glucosidic linkages in cellulose, lichenin and cereal beta-D-glucans.. In Oryza sativa subsp. japonica (Rice), this protein is Endoglucanase 1 (GLU7).